The chain runs to 101 residues: Iron-sulfur cluster assembly protein CyaY (101 aa).

It belongs to the frataxin family.

Functionally, involved in iron-sulfur (Fe-S) cluster assembly. May act as a regulator of Fe-S biogenesis. The chain is Iron-sulfur cluster assembly protein CyaY from Actinobacillus pleuropneumoniae serotype 7 (strain AP76).